The sequence spans 149 residues: Arginine repressor (149 aa).

It belongs to the ArgR family.

It localises to the cytoplasm. It functions in the pathway amino-acid biosynthesis; L-arginine biosynthesis [regulation]. In terms of biological role, regulates arginine biosynthesis genes. This is Arginine repressor from Bacillus pumilus (strain SAFR-032).